The sequence spans 689 residues: DNA ligase (689 aa).

Residues 40 to 44, 89 to 90, and Glu121 contribute to the NAD(+) site; these read DAEYD and SL. Catalysis depends on Lys123, which acts as the N6-AMP-lysine intermediate. Positions 144, 179, 295, and 319 each coordinate NAD(+). Residues Cys413, Cys416, Cys431, and Cys437 each contribute to the Zn(2+) site. Positions 610–689 constitute a BRCT domain; the sequence is RAQSSLTGKI…EEWLTLIKNA (80 aa).

It belongs to the NAD-dependent DNA ligase family. LigA subfamily. Mg(2+) serves as cofactor. The cofactor is Mn(2+).

The enzyme catalyses NAD(+) + (deoxyribonucleotide)n-3'-hydroxyl + 5'-phospho-(deoxyribonucleotide)m = (deoxyribonucleotide)n+m + AMP + beta-nicotinamide D-nucleotide.. Functionally, DNA ligase that catalyzes the formation of phosphodiester linkages between 5'-phosphoryl and 3'-hydroxyl groups in double-stranded DNA using NAD as a coenzyme and as the energy source for the reaction. It is essential for DNA replication and repair of damaged DNA. This is DNA ligase from Rickettsia akari (strain Hartford).